Here is a 185-residue protein sequence, read N- to C-terminus: Ribosome-recycling factor (185 aa).

This sequence belongs to the RRF family.

It localises to the cytoplasm. Responsible for the release of ribosomes from messenger RNA at the termination of protein biosynthesis. May increase the efficiency of translation by recycling ribosomes from one round of translation to another. In Methylobacillus flagellatus (strain ATCC 51484 / DSM 6875 / VKM B-1610 / KT), this protein is Ribosome-recycling factor.